A 344-amino-acid polypeptide reads, in one-letter code: Microcin C7 self-immunity protein MccF (344 aa).

It belongs to the peptidase S66 family.

Functionally, involved in specific self-immunity to microcin C7. The protein is Microcin C7 self-immunity protein MccF (mccF) of Escherichia coli.